Consider the following 238-residue polypeptide: 15,16-dihydrobiliverdin:ferredoxin oxidoreductase (238 aa).

This sequence belongs to the HY2 family.

It carries out the reaction 15,16-dihydrobiliverdin + oxidized 2[4Fe-4S]-[ferredoxin] = biliverdin IXalpha + reduced 2[4Fe-4S]-[ferredoxin] + 2 H(+). Catalyzes the two-electron reduction of biliverdin IX-alpha at the C15 methine bridge. This Prochlorococcus marinus (strain MIT 9211) protein is 15,16-dihydrobiliverdin:ferredoxin oxidoreductase.